A 638-amino-acid polypeptide reads, in one-letter code: DNA mismatch repair protein MutL (638 aa).

The segment at 404–433 (FGTQTNAFGSMATPRDNSRGNYSAGESRQR) is disordered.

It belongs to the DNA mismatch repair MutL/HexB family.

This protein is involved in the repair of mismatches in DNA. It is required for dam-dependent methyl-directed DNA mismatch repair. May act as a 'molecular matchmaker', a protein that promotes the formation of a stable complex between two or more DNA-binding proteins in an ATP-dependent manner without itself being part of a final effector complex. This Shewanella baltica (strain OS195) protein is DNA mismatch repair protein MutL.